The primary structure comprises 501 residues: ATP synthase subunit alpha (501 aa).

169–176 (GDRQTGKT) is an ATP binding site.

The protein belongs to the ATPase alpha/beta chains family. F-type ATPases have 2 components, CF(1) - the catalytic core - and CF(0) - the membrane proton channel. CF(1) has five subunits: alpha(3), beta(3), gamma(1), delta(1), epsilon(1). CF(0) has three main subunits: a(1), b(2) and c(9-12). The alpha and beta chains form an alternating ring which encloses part of the gamma chain. CF(1) is attached to CF(0) by a central stalk formed by the gamma and epsilon chains, while a peripheral stalk is formed by the delta and b chains.

It is found in the cell membrane. The enzyme catalyses ATP + H2O + 4 H(+)(in) = ADP + phosphate + 5 H(+)(out). In terms of biological role, produces ATP from ADP in the presence of a proton gradient across the membrane. The alpha chain is a regulatory subunit. This Streptococcus pneumoniae serotype 19F (strain G54) protein is ATP synthase subunit alpha.